The sequence spans 471 residues: Probable ribonuclease FAU-1 (471 aa).

The protein belongs to the FAU-1 family.

Probable RNase involved in rRNA stability through maturation and/or degradation of precursor rRNAs. Binds to RNA in loop regions with AU-rich sequences. The polypeptide is Probable ribonuclease FAU-1 (Aeropyrum pernix (strain ATCC 700893 / DSM 11879 / JCM 9820 / NBRC 100138 / K1)).